A 122-amino-acid chain; its full sequence is Fluoride-specific ion channel FluC (122 aa).

Transmembrane regions (helical) follow at residues 4-24, 33-53, 66-86, and 95-115; these read LAVL…SIFI, LGTM…SIYL, LLIT…LEGI, and LKAF…VALG. Na(+) contacts are provided by Gly-73 and Thr-76.

Belongs to the fluoride channel Fluc/FEX (TC 1.A.43) family.

It localises to the cell inner membrane. The enzyme catalyses fluoride(in) = fluoride(out). Na(+) is not transported, but it plays an essential structural role and its presence is essential for fluoride channel function. Fluoride-specific ion channel. Important for reducing fluoride concentration in the cell, thus reducing its toxicity. This Hydrogenobaculum sp. (strain Y04AAS1) protein is Fluoride-specific ion channel FluC.